Consider the following 316-residue polypeptide: Probable prolyl 4-hydroxylase 7 (316 aa).

The Cytoplasmic portion of the chain corresponds to 1-4; it reads MDSR. The chain crosses the membrane as a helical; Signal-anchor for type II membrane protein span at residues 5-24; sequence IFLAFSLCFLFTLPLISSAP. Over 25 to 316 the chain is Lumenal; it reads NRFLTRSSNT…CRKSCKACSS (292 aa). A glycan (N-linked (GlcNAc...) asparagine) is linked at N96. Residues 139-261 enclose the Fe2OG dioxygenase domain; the sequence is NGESMQILHY…KWSATRWIHV (123 aa). Fe cation is bound by residues H157 and D159. N233 is a glycosylation site (N-linked (GlcNAc...) asparagine). A Fe cation-binding site is contributed by H242. K252 serves as a coordination point for 2-oxoglutarate. Residues 274 to 314 enclose the ShKT domain; that stretch reads CMDENVSCEKWAKAGECQKNPTYMVGSDKDHGYCRKSCKAC. Intrachain disulfides connect C274–C314, C281–C307, and C290–C311. Residue N278 is glycosylated (N-linked (GlcNAc...) asparagine).

This sequence belongs to the P4HA family. Fe(2+) serves as cofactor. The cofactor is L-ascorbate.

The protein resides in the endoplasmic reticulum membrane. It catalyses the reaction L-prolyl-[collagen] + 2-oxoglutarate + O2 = trans-4-hydroxy-L-prolyl-[collagen] + succinate + CO2. Its function is as follows. Catalyzes the post-translational formation of 4-hydroxyproline in -Xaa-Pro-Gly- sequences in proline-rich peptide sequences of plant glycoproteins and other proteins. Hydroxyprolines are important constituent of many plant cell wall glycoproteins such as extensins, hydroxyproline-rich glycoproteins, lectins and arabinogalactan proteins. The sequence is that of Probable prolyl 4-hydroxylase 7 from Arabidopsis thaliana (Mouse-ear cress).